Here is a 151-residue protein sequence, read N- to C-terminus: MLLPKRTKYRKMQKGRSPGLSYRGNNVVFGEYGLMALEPSWISSRQIEAARRAITNYVKRGGKVWIRIFPDKPVTRKPAETRMGGGKGSVDHWVAVVKPGRIMFELAGVREDVAHEALRRAAQKLPIKCKVIDREEQGTMAKPEEVSSESE.

This sequence belongs to the universal ribosomal protein uL16 family. Part of the 50S ribosomal subunit.

Functionally, binds 23S rRNA and is also seen to make contacts with the A and possibly P site tRNAs. The sequence is that of Large ribosomal subunit protein uL16 from Chloroflexus aurantiacus (strain ATCC 29364 / DSM 637 / Y-400-fl).